The sequence spans 89 residues: Small ribosomal subunit protein uS15 (89 aa).

This sequence belongs to the universal ribosomal protein uS15 family. In terms of assembly, part of the 30S ribosomal subunit. Forms a bridge to the 50S subunit in the 70S ribosome, contacting the 23S rRNA.

Its function is as follows. One of the primary rRNA binding proteins, it binds directly to 16S rRNA where it helps nucleate assembly of the platform of the 30S subunit by binding and bridging several RNA helices of the 16S rRNA. Forms an intersubunit bridge (bridge B4) with the 23S rRNA of the 50S subunit in the ribosome. This is Small ribosomal subunit protein uS15 from Klebsiella pneumoniae subsp. pneumoniae (strain ATCC 700721 / MGH 78578).